A 506-amino-acid chain; its full sequence is Maturase K (506 aa).

The protein belongs to the intron maturase 2 family. MatK subfamily.

The protein localises to the plastid. The protein resides in the chloroplast. Usually encoded in the trnK tRNA gene intron. Probably assists in splicing its own and other chloroplast group II introns. The polypeptide is Maturase K (Lactuca sativa (Garden lettuce)).